The chain runs to 515 residues: MDEFHRNGKEDSSWQQCFLYPLFFQEDLYAIYHDHYLDGSSSSEPMEHVSSNDQFSFLTVKRLIGQIRQQNHSIVLFVNCDPNPLVERNKSSYYESVLEGLTLVLEVPFSIRSKYSVEGINEWKSFRSIHSIFPFLEDKFPHSNYISDTRIPYSIHPEILVRTFRRWIRDAPSLHPLRSVLYEYRNSPENLQRSIIVAPRVNTRFFLFLWNHYVYECESILVPLLKRSSHLRSLSHGSFPERTHFDRKIKHIIIFSRRNSLKRIWSLKDPNIHYFRYGERSIIAIKGTHLLVKKCRYHLPIFRQCYFHLWSEPYRVCSHQLSKNCSSSLGYFLRIRMKPLLVRTKMLDELFIADLITGEFDPIVPIVPIIGLLAREKFCDISGRPISKLSWTSLTDDDILDRFDRIWRNLFHYYSGSFGRDGLYRIKYILSLSCAKTLACKHKSTIRVVRKELGPELFKKSFSKEREFDSPPFSSKAAARSQRERIWHSDIPQINPLANSWQKIQDLKIENLFDQ.

The protein belongs to the intron maturase 2 family. MatK subfamily.

Its subcellular location is the plastid. It localises to the chloroplast. Its function is as follows. Usually encoded in the trnK tRNA gene intron. Probably assists in splicing its own and other chloroplast group II introns. This chain is Maturase K, found in Larix laricina (Tamarack).